The following is a 967-amino-acid chain: Putative helicase MOV-10 (967 aa).

Residues 85–117 (ADQYRRPRTDTEVSAPAPGQQPSSGPPAPQSRA) form a disordered region. A compositionally biased stretch (low complexity) spans 98 to 107 (SAPAPGQQPS). 516–523 (GPPGTGKT) serves as a coordination point for ATP. Residues 638–641 (DECG) carry the DEAG box motif.

It belongs to the DNA2/NAM7 helicase family. SDE3 subfamily.

Its subcellular location is the cytoplasm. The protein localises to the P-body. It is found in the cytoplasmic ribonucleoprotein granule. The protein resides in the stress granule. It localises to the nucleus. It catalyses the reaction ATP + H2O = ADP + phosphate + H(+). Functionally, 5' to 3' RNA helicase that is involved in a number of cellular roles ranging from mRNA metabolism and translation, modulation of viral infectivity, inhibition of retrotransposition, or regulation of synaptic transmission. Plays an important role in innate antiviral immunity by promoting type I interferon production. Required for microRNA (miRNA)-mediated gene silencing by the RNA-induced silencing complex (RISC). Required for both miRNA-mediated translational repression and miRNA-mediated cleavage of complementary mRNAs by RISC. In cooperation with FMR1, regulates miRNA-mediated translational repression by AGO2. Restricts retrotransposition of long interspersed element-1 (LINE-1). Required for embryonic viability and for normal central nervous system development and function. May function as a messenger ribonucleoprotein (mRNP) clearance factor. The protein is Putative helicase MOV-10 (MOV10) of Gallus gallus (Chicken).